The sequence spans 79 residues: Small ribosomal subunit protein uS17 (79 aa).

This sequence belongs to the universal ribosomal protein uS17 family. As to quaternary structure, part of the 30S ribosomal subunit.

Its function is as follows. One of the primary rRNA binding proteins, it binds specifically to the 5'-end of 16S ribosomal RNA. The chain is Small ribosomal subunit protein uS17 from Caulobacter vibrioides (strain NA1000 / CB15N) (Caulobacter crescentus).